A 285-amino-acid chain; its full sequence is Acetyl-coenzyme A carboxylase carboxyl transferase subunit beta (285 aa).

Residues Ile29 to Asn285 enclose the CoA carboxyltransferase N-terminal domain. Positions 33, 36, 52, and 55 each coordinate Zn(2+). The C4-type zinc-finger motif lies at Cys33–Cys55.

This sequence belongs to the AccD/PCCB family. In terms of assembly, acetyl-CoA carboxylase is a heterohexamer composed of biotin carboxyl carrier protein (AccB), biotin carboxylase (AccC) and two subunits each of ACCase subunit alpha (AccA) and ACCase subunit beta (AccD). The cofactor is Zn(2+).

The protein resides in the cytoplasm. It carries out the reaction N(6)-carboxybiotinyl-L-lysyl-[protein] + acetyl-CoA = N(6)-biotinyl-L-lysyl-[protein] + malonyl-CoA. It participates in lipid metabolism; malonyl-CoA biosynthesis; malonyl-CoA from acetyl-CoA: step 1/1. In terms of biological role, component of the acetyl coenzyme A carboxylase (ACC) complex. Biotin carboxylase (BC) catalyzes the carboxylation of biotin on its carrier protein (BCCP) and then the CO(2) group is transferred by the transcarboxylase to acetyl-CoA to form malonyl-CoA. The sequence is that of Acetyl-coenzyme A carboxylase carboxyl transferase subunit beta from Staphylococcus epidermidis (strain ATCC 12228 / FDA PCI 1200).